The primary structure comprises 130 residues: D-ribose pyranase (130 aa).

Catalysis depends on histidine 20, which acts as the Proton donor. Substrate contacts are provided by residues aspartate 28, histidine 97, and tyrosine 119–asparagine 121.

The protein belongs to the RbsD / FucU family. RbsD subfamily. Homodecamer.

It is found in the cytoplasm. The catalysed reaction is beta-D-ribopyranose = beta-D-ribofuranose. It functions in the pathway carbohydrate metabolism; D-ribose degradation; D-ribose 5-phosphate from beta-D-ribopyranose: step 1/2. Its function is as follows. Catalyzes the interconversion of beta-pyran and beta-furan forms of D-ribose. This Lacticaseibacillus casei (strain BL23) (Lactobacillus casei) protein is D-ribose pyranase.